Here is a 529-residue protein sequence, read N- to C-terminus: Putative E3 ubiquitin-protein ligase ARI4 (529 aa).

Positions 1–22 (MDDEYMSLEEEEDNCYPSEFDD) are enriched in acidic residues. Positions 1-23 (MDDEYMSLEEEEDNCYPSEFDDH) are disordered. A TRIAD supradomain region spans residues 115–327 (KTMKCDICME…IAGHSCGRYK (213 aa)). Zn(2+)-binding residues include C119, C122, C137, H139, C142, C145, C164, C169, C206, C212, C230, C232, C237, C240, H245, C250, C277, and C280. The RING-type 1 zinc finger occupies 119–169 (CDICMEEDLSKYAMTRMECGHRFCNDCWKEHFTVRINEGEGKRIRCMAYKC). Residues 186–250 (EKFDRFLIES…LSESHSPCSC (65 aa)) form an IBR-type zinc finger. The segment at 277-305 (CPKCSKPIQKRDGCNHMTCKCGQHFCWLC) adopts an RING-type 2; atypical zinc-finger fold. C290 is an active-site residue. Zn(2+) is bound by residues C295, C297, C302, C305, H313, and C323.

It belongs to the RBR family. Ariadne subfamily. The cofactor is Zn(2+).

The catalysed reaction is [E2 ubiquitin-conjugating enzyme]-S-ubiquitinyl-L-cysteine + [acceptor protein]-L-lysine = [E2 ubiquitin-conjugating enzyme]-L-cysteine + [acceptor protein]-N(6)-ubiquitinyl-L-lysine.. The protein operates within protein modification; protein ubiquitination. Functionally, might act as an E3 ubiquitin-protein ligase, or as part of E3 complex, which accepts ubiquitin from specific E2 ubiquitin-conjugating enzymes and then transfers it to substrates. The polypeptide is Putative E3 ubiquitin-protein ligase ARI4 (ARI4) (Arabidopsis thaliana (Mouse-ear cress)).